The chain runs to 199 residues: NAD(P)H dehydrogenase (quinone) (199 aa).

Residues 4–190 (VLVLYYSAYG…DAARFQGAHV (187 aa)) enclose the Flavodoxin-like domain. Residues 10 to 15 (SAYGHI) and 78 to 80 (TRY) each bind FMN. Tyrosine 12 is a binding site for NAD(+). Tryptophan 98 is a substrate binding site. FMN is bound by residues 113 to 119 (SSATQHG) and histidine 134.

The protein belongs to the WrbA family. Requires FMN as cofactor.

The catalysed reaction is a quinone + NADH + H(+) = a quinol + NAD(+). The enzyme catalyses a quinone + NADPH + H(+) = a quinol + NADP(+). The protein is NAD(P)H dehydrogenase (quinone) of Sinorhizobium fredii (strain NBRC 101917 / NGR234).